A 57-amino-acid polypeptide reads, in one-letter code: Large ribosomal subunit protein bL32 (57 aa).

It belongs to the bacterial ribosomal protein bL32 family.

This Staphylococcus epidermidis (strain ATCC 35984 / DSM 28319 / BCRC 17069 / CCUG 31568 / BM 3577 / RP62A) protein is Large ribosomal subunit protein bL32.